The sequence spans 92 residues: Enhancer of yellow 2 transcription factor (92 aa).

The protein belongs to the ENY2 family. Component of the nuclear pore complex (NPC)-associated TREX-2 complex (transcription and export complex 2). Component of the SAGA transcription coactivator-HAT complex. Within the SAGA complex, participates in a subcomplex of SAGA called the DUB module (deubiquitination module).

It is found in the nucleus. It localises to the nucleoplasm. Its function is as follows. Involved in mRNA export coupled transcription activation by association with both the TREX-2 and the SAGA complexes. The transcription regulatory histone acetylation (HAT) complex SAGA is a multiprotein complex that activates transcription by remodeling chromatin and mediating histone acetylation and deubiquitination. Within the SAGA complex, participates in a subcomplex that specifically deubiquitinates histones. The SAGA complex is recruited to specific gene promoters by activators, where it is required for transcription. The TREX-2 complex functions in docking export-competent ribonucleoprotein particles (mRNPs) to the nuclear entrance of the nuclear pore complex (nuclear basket). TREX-2 participates in mRNA export and accurate chromatin positioning in the nucleus by tethering genes to the nuclear periphery. This is Enhancer of yellow 2 transcription factor from Aedes aegypti (Yellowfever mosquito).